We begin with the raw amino-acid sequence, 474 residues long: Salutaridinol 7-O-acetyltransferase (474 aa).

His-163 (proton acceptor) is an active-site residue. Residues Glu-213 to Glu-234 form a disordered region. The segment covering Arg-214–Pro-230 has biased composition (polar residues). Residue Asp-416 is the Proton acceptor of the active site.

This sequence belongs to the plant acyltransferase family. In terms of tissue distribution, expressed in root, stem, leaf and capsule of the mature plant. Restricted to sieve elements of the phloem adjacent or proximal to laticifers.

The catalysed reaction is (7S)-salutaridinol + acetyl-CoA = (7S)-O-acetylsalutaridinol + CoA. Its pathway is alkaloid biosynthesis; morphine biosynthesis. Functionally, acetyltransferase involved in biosynthesis of morphinan-type benzylisoquinoline and opiate alkaloids natural products. Catalyzes the conversion of the phenanthrene alkaloid salutaridinol to salutaridinol-7-O-acetate, the immediate precursor of thebaine along the morphine biosynthetic pathway. Conversion of 7-O-acetylsalutaridinol into thebaine is spontaneous. The chain is Salutaridinol 7-O-acetyltransferase from Papaver somniferum (Opium poppy).